The following is a 493-amino-acid chain: Tripartite motif-containing protein 5 (493 aa).

At Ala-2 the chain carries N-acetylalanine. The RING-type zinc-finger motif lies at Cys-15–Arg-59. Position 86 is a phosphoserine (Ser-86). A B box-type zinc finger spans residues Gln-90–Glu-132. Cys-95, His-98, Cys-117, and His-123 together coordinate Zn(2+). Residues Thr-131–Gln-240 adopt a coiled-coil conformation. Residues Phe-185–Asn-198 are required for interaction with GABARAP and for autophagy. The B30.2/SPRY domain occupies Leu-281–Ser-493.

This sequence belongs to the TRIM/RBCC family. In terms of assembly, can form homodimers and homotrimers. In addition to lower-order dimerization, also exhibits a higher-order multimerization and both low- and high-order multimerizations are essential for its restriction activity. Interacts with BTBD1 and BTBD2. Interacts with PSMC4, PSMC5, PSMD7 and HSPA8/HSC70. Interacts (via B30.2/SPRY domain) with HSPA1A/B. Interacts with PSMC2, MAP3K7/TAK1, TAB2 and TAB3. Interacts with SQSTM1. Interacts with TRIM6 and TRIM34. Interacts with ULK1 (phosphorylated form), GABARAP, GABARAPL1, GABARAPL2, MAP1LC3A, MAP1LC3C and BECN1. Post-translationally, degraded in a proteasome-independent fashion in the absence of viral infection but in a proteasome-dependent fashion following exposure to restriction sensitive virus. In terms of processing, autoubiquitinated in a RING finger- and UBE2D2-dependent manner. Monoubiquitinated by TRIM21. Deubiquitinated by Yersinia YopJ. Ubiquitination may not lead to proteasomal degradation.

Its subcellular location is the cytoplasm. The protein localises to the nucleus. It catalyses the reaction S-ubiquitinyl-[E2 ubiquitin-conjugating enzyme]-L-cysteine + [acceptor protein]-L-lysine = [E2 ubiquitin-conjugating enzyme]-L-cysteine + N(6)-ubiquitinyl-[acceptor protein]-L-lysine.. It participates in protein modification; protein ubiquitination. Its function is as follows. Capsid-specific restriction factor that prevents infection from non-host-adapted retroviruses. Blocks viral replication early in the life cycle, after viral entry but before reverse transcription. In addition to acting as a capsid-specific restriction factor, also acts as a pattern recognition receptor that activates innate immune signaling in response to the retroviral capsid lattice. Binding to the viral capsid triggers its E3 ubiquitin ligase activity, and in concert with the heterodimeric ubiquitin conjugating enzyme complex UBE2V1-UBE2N (also known as UBC13-UEV1A complex) generates 'Lys-63'-linked polyubiquitin chains, which in turn are catalysts in the autophosphorylation of the MAP3K7/TAK1 complex (includes TAK1, TAB2, and TAB3). Activation of the MAP3K7/TAK1 complex by autophosphorylation results in the induction and expression of NF-kappa-B and MAPK-responsive inflammatory genes, thereby leading to an innate immune response in the infected cell. Plays a role in regulating autophagy through activation of autophagy regulator BECN1 by causing its dissociation from its inhibitors BCL2 and TAB2. This chain is Tripartite motif-containing protein 5 (TRIM5), found in Pan paniscus (Pygmy chimpanzee).